We begin with the raw amino-acid sequence, 148 residues long: Snaclec 4 (148 aa).

A signal peptide spans 1–23 (MGRFIFVSFSLLVVFFSLSGTEA). One can recognise a C-type lectin domain in the interval 34–148 (YDQNCYKAFE…DTQFRLQEPG (115 aa)).

Belongs to the snaclec family. As to quaternary structure, heterodimer; disulfide-linked. In terms of processing, contains disulfide bonds. In terms of tissue distribution, expressed by the venom gland.

It is found in the secreted. Interferes with one step of hemostasis (modulation of platelet aggregation, or coagulation cascade, for example). The polypeptide is Snaclec 4 (Echis pyramidum leakeyi (Leakey's carpet viper)).